We begin with the raw amino-acid sequence, 218 residues long: Probable glutamine ABC transporter permease protein GlnP (218 aa).

3 consecutive transmembrane segments (helical) span residues 19–39 (FLVT…FGLI), 65–85 (LPLL…GIKL), and 188–208 (FFPI…SLSL). Residues 19–210 (FLVTLYVAFI…AVNYSLSLAA (192 aa)) form the ABC transmembrane type-1 domain.

This sequence belongs to the binding-protein-dependent transport system permease family. As to quaternary structure, the complex is composed of two ATP-binding proteins (GlnQ), two transmembrane proteins (GlnM and GlnP) and a solute-binding protein (GlnH).

The protein localises to the cell membrane. Its function is as follows. Part of the ABC transporter complex GlnHMPQ involved in glutamine transport. Probably responsible for the translocation of the substrate across the membrane. The sequence is that of Probable glutamine ABC transporter permease protein GlnP (glnP) from Bacillus subtilis (strain 168).